The sequence spans 280 residues: Bis(5'-nucleosyl)-tetraphosphatase, symmetrical (280 aa).

Belongs to the Ap4A hydrolase family.

It catalyses the reaction P(1),P(4)-bis(5'-adenosyl) tetraphosphate + H2O = 2 ADP + 2 H(+). Its function is as follows. Hydrolyzes diadenosine 5',5'''-P1,P4-tetraphosphate to yield ADP. The polypeptide is Bis(5'-nucleosyl)-tetraphosphatase, symmetrical (Paracidovorax citrulli (strain AAC00-1) (Acidovorax citrulli)).